A 32-amino-acid polypeptide reads, in one-letter code: Tail virion protein G7P (32 aa).

A helical membrane pass occupies residues 9-29 (LYQLIFNAGLVICFGLGVISG).

The protein belongs to the inovirus G7P protein family.

The protein localises to the virion. Its subcellular location is the host membrane. Its function is as follows. May initiate with G9P the virion concomitant assembly-budding process, by interacting with the packaging signal of the viral genome. The assembly-budding takes place at the host inner membrane. In turn, G7P and G9P are present at the end of the filamentous virion that emerges first from the bacterial host. This chain is Tail virion protein G7P (VII), found in Escherichia phage If1 (Bacteriophage If1).